Here is a 324-residue protein sequence, read N- to C-terminus: Serpentine receptor class gamma-10 (324 aa).

The next 8 helical transmembrane spans lie at 39 to 59 (SSYL…VFHG), 69 to 89 (MLYC…VIFG), 91 to 111 (IFIY…TPSI), 128 to 146 (TFSQ…IFLM), 155 to 175 (ILKP…WKIL), 206 to 226 (LFHF…TILG), 246 to 266 (MIMA…VFFA), and 279 to 299 (IVSF…IVMS).

This sequence belongs to the nematode receptor-like protein srg family.

It localises to the membrane. The polypeptide is Serpentine receptor class gamma-10 (srg-10) (Caenorhabditis elegans).